A 191-amino-acid chain; its full sequence is Cytochrome c biogenesis ATP-binding export protein CcmA (191 aa).

Residues 2–190 (LSLHQLQFKN…SIKSAQILRI (189 aa)) form the ABC transporter domain. 29-36 (GANGCGKS) is an ATP binding site.

It belongs to the ABC transporter superfamily. CcmA exporter (TC 3.A.1.107) family. In terms of assembly, the complex is composed of two ATP-binding proteins (CcmA) and two transmembrane proteins (CcmB).

It localises to the cell inner membrane. The enzyme catalyses heme b(in) + ATP + H2O = heme b(out) + ADP + phosphate + H(+). Functionally, part of the ABC transporter complex CcmAB involved in the biogenesis of c-type cytochromes; once thought to export heme, this seems not to be the case, but its exact role is uncertain. Responsible for energy coupling to the transport system. The protein is Cytochrome c biogenesis ATP-binding export protein CcmA of Rickettsia conorii (strain ATCC VR-613 / Malish 7).